The sequence spans 307 residues: UDP-3-O-acyl-N-acetylglucosamine deacetylase (307 aa).

Positions 78, 241, and 245 each coordinate Zn(2+). Histidine 268 serves as the catalytic Proton donor.

Belongs to the LpxC family. Zn(2+) serves as cofactor.

It catalyses the reaction a UDP-3-O-[(3R)-3-hydroxyacyl]-N-acetyl-alpha-D-glucosamine + H2O = a UDP-3-O-[(3R)-3-hydroxyacyl]-alpha-D-glucosamine + acetate. Its pathway is glycolipid biosynthesis; lipid IV(A) biosynthesis; lipid IV(A) from (3R)-3-hydroxytetradecanoyl-[acyl-carrier-protein] and UDP-N-acetyl-alpha-D-glucosamine: step 2/6. Catalyzes the hydrolysis of UDP-3-O-myristoyl-N-acetylglucosamine to form UDP-3-O-myristoylglucosamine and acetate, the committed step in lipid A biosynthesis. This chain is UDP-3-O-acyl-N-acetylglucosamine deacetylase, found in Bordetella bronchiseptica (strain ATCC BAA-588 / NCTC 13252 / RB50) (Alcaligenes bronchisepticus).